A 52-amino-acid chain; its full sequence is Large ribosomal subunit protein bL32c (52 aa).

It belongs to the bacterial ribosomal protein bL32 family.

Its subcellular location is the plastid. It is found in the chloroplast. The sequence is that of Large ribosomal subunit protein bL32c from Capsella bursa-pastoris (Shepherd's purse).